Consider the following 145-residue polypeptide: Plastocyanin, chloroplastic (145 aa).

A chloroplast-targeting transit peptide spans 1–47 (MKATLRAPASRASAVRPVASLKAAAQRVASVAGVSVASLALTLAAHA). A Plastocyanin-like domain is found at 48 to 145 (DATVKLGADS…AGMVGKIIVQ (98 aa)). His-85, Cys-130, His-133, and Met-138 together coordinate Cu cation.

Belongs to the plastocyanin family. Cu(2+) serves as cofactor.

It localises to the plastid. Its subcellular location is the chloroplast thylakoid membrane. In terms of biological role, participates in electron transfer between P700 and the cytochrome b6-f complex in photosystem I. The sequence is that of Plastocyanin, chloroplastic (PETE) from Chlamydomonas reinhardtii (Chlamydomonas smithii).